A 167-amino-acid chain; its full sequence is Small ribosomal subunit protein uS5 (167 aa).

The region spanning 12 to 75 is the S5 DRBM domain; it reads LEERVVTINR…EDAKKNMVFV (64 aa).

It belongs to the universal ribosomal protein uS5 family. In terms of assembly, part of the 30S ribosomal subunit. Contacts proteins S4 and S8.

Functionally, with S4 and S12 plays an important role in translational accuracy. Located at the back of the 30S subunit body where it stabilizes the conformation of the head with respect to the body. This Listeria innocua serovar 6a (strain ATCC BAA-680 / CLIP 11262) protein is Small ribosomal subunit protein uS5.